Reading from the N-terminus, the 292-residue chain is Probable endonuclease 4 (292 aa).

Residues His71, His111, Glu148, Asp182, His185, His217, Asp230, His232, and Glu262 each coordinate Zn(2+).

This sequence belongs to the AP endonuclease 2 family. Zn(2+) is required as a cofactor.

It catalyses the reaction Endonucleolytic cleavage to 5'-phosphooligonucleotide end-products.. Functionally, endonuclease IV plays a role in DNA repair. It cleaves phosphodiester bonds at apurinic or apyrimidinic (AP) sites, generating a 3'-hydroxyl group and a 5'-terminal sugar phosphate. This is Probable endonuclease 4 from Aster yellows witches'-broom phytoplasma (strain AYWB).